The following is a 139-amino-acid chain: CLAVATA3/ESR (CLE)-related protein 1 (139 aa).

An N-terminal signal peptide occupies residues 1-22; the sequence is MPNIFKILLIVLLAVVSFRLSA. The segment at 23-90 is required for secretion from the host cytoplasm to the host apoplasm; it reads STGDKKTAND…VPSHLTNRSM (68 aa). 2 N-linked (GlcNAc...) asparagine glycosylation sites follow: Asn37 and Asn87. Residues 66 to 139 form a disordered region; it reads AIGRSNAQGG…SPSGPDPHHH (74 aa). Positions 100–125 form a coiled coil; that stretch reads EKGAATRVEKMRAQLRELAEKMTDKD. Residues 106–128 are compositionally biased toward basic and acidic residues; the sequence is RVEKMRAQLRELAEKMTDKDPKR. The CLE signature appears at 128 to 139; it reads RLSPSGPDPHHH.

It belongs to the CLV3/ESR signal peptide family. In terms of tissue distribution, highly expressed exclusively within the dorsal esophageal gland cell during syncytium formation in host plants (at protein level).

The protein localises to the secreted. Its subcellular location is the host cytoplasm. It is found in the host extracellular space. The protein resides in the extracellular space. It localises to the apoplast. In terms of biological role, mimics host plant CLE extracellular signal peptides that regulate cell fate. May play a role in the differentiation or division of feeding cells (syncytia) induced in plant roots during infection. The sequence is that of CLAVATA3/ESR (CLE)-related protein 1 (CLE1) from Heterodera glycines (Soybean cyst nematode worm).